Reading from the N-terminus, the 358-residue chain is UDP-N-acetylglucosamine--N-acetylmuramyl-(pentapeptide) pyrophosphoryl-undecaprenol N-acetylglucosamine transferase (358 aa).

UDP-N-acetyl-alpha-D-glucosamine is bound by residues 12 to 14 (TGG), Asn124, Arg162, Ser185, Ile242, 261 to 266 (ALTVSE), and Gln287.

It belongs to the glycosyltransferase 28 family. MurG subfamily.

It is found in the cell inner membrane. The catalysed reaction is di-trans,octa-cis-undecaprenyl diphospho-N-acetyl-alpha-D-muramoyl-L-alanyl-D-glutamyl-meso-2,6-diaminopimeloyl-D-alanyl-D-alanine + UDP-N-acetyl-alpha-D-glucosamine = di-trans,octa-cis-undecaprenyl diphospho-[N-acetyl-alpha-D-glucosaminyl-(1-&gt;4)]-N-acetyl-alpha-D-muramoyl-L-alanyl-D-glutamyl-meso-2,6-diaminopimeloyl-D-alanyl-D-alanine + UDP + H(+). The protein operates within cell wall biogenesis; peptidoglycan biosynthesis. Functionally, cell wall formation. Catalyzes the transfer of a GlcNAc subunit on undecaprenyl-pyrophosphoryl-MurNAc-pentapeptide (lipid intermediate I) to form undecaprenyl-pyrophosphoryl-MurNAc-(pentapeptide)GlcNAc (lipid intermediate II). The protein is UDP-N-acetylglucosamine--N-acetylmuramyl-(pentapeptide) pyrophosphoryl-undecaprenol N-acetylglucosamine transferase of Pseudoalteromonas translucida (strain TAC 125).